A 535-amino-acid polypeptide reads, in one-letter code: Dynein axonemal assembly factor 8 (535 aa).

Disordered stretches follow at residues 112-215 (AELA…QERR), 228-267 (RDACGPASSDQGGVKEAPCHAVESAARSKMPLAEPPEGPP), 344-380 (PADTPQDTEEAGAGSRCSSRKPGSEAGPGPQLAQGMR), 395-444 (TVPP…LRSC), and 461-535 (IAQP…LDQL). A compositionally biased stretch (basic and acidic residues) spans 125–139 (RTKDASSQEGRDPGR). Positions 166 to 175 (GSLSFNTKGS) are enriched in polar residues. The residue at position 175 (serine 175) is a Phosphoserine. A Phosphoserine modification is found at serine 362. The span at 415 to 424 (DSEEEEEEVE) shows a compositional bias: acidic residues. Over residues 435–444 (SPSSLGLRSC) the composition is skewed to polar residues.

It localises to the dynein axonemal particle. The protein localises to the cytoplasm. In terms of biological role, in cyliated cells, dynein axonemal particle-specific protein required for deployment of ODA to the axoneme. Interacts with outer dynein arm (ODA) subunits. This is Dynein axonemal assembly factor 8 (DNAAF8) from Macaca fascicularis (Crab-eating macaque).